A 320-amino-acid polypeptide reads, in one-letter code: tRNA U34 carboxymethyltransferase (320 aa).

Residues Lys-89, Trp-103, Lys-108, Gly-128, 150-152, 179-180, Met-194, Tyr-198, and Arg-313 contribute to the carboxy-S-adenosyl-L-methionine site; these read DPT and IE.

The protein belongs to the class I-like SAM-binding methyltransferase superfamily. CmoB family. Homotetramer.

It catalyses the reaction carboxy-S-adenosyl-L-methionine + 5-hydroxyuridine(34) in tRNA = 5-carboxymethoxyuridine(34) in tRNA + S-adenosyl-L-homocysteine + H(+). Its function is as follows. Catalyzes carboxymethyl transfer from carboxy-S-adenosyl-L-methionine (Cx-SAM) to 5-hydroxyuridine (ho5U) to form 5-carboxymethoxyuridine (cmo5U) at position 34 in tRNAs. This chain is tRNA U34 carboxymethyltransferase, found in Actinobacillus pleuropneumoniae serotype 3 (strain JL03).